The primary structure comprises 1426 residues: Nephrocystin-4 (1426 aa).

Ser142 bears the Phosphoserine mark. 2 disordered regions span residues 450–536 (GSEE…SPAQ) and 896–935 (RQGKGPQDVSRESDATRRRKLERMRSVRLQEAGGDLGRRG). Positions 474 to 486 (KPPTSPSSPPAPV) are enriched in pro residues. A compositionally biased stretch (polar residues) spans 503 to 536 (SISQLAASPRSPTQHCLARPTSQLPHGSQASPAQ). Residues 823 to 1426 (LTLANVGHPC…EAFCVKVIYQ (604 aa)) are sufficient for basal bodies localization.

This sequence belongs to the NPHP4 family. Interacts with NPHP1. Interacts with NPHP1 and RPGRIP1L/NPHP8; NPHP1, NPHP4 and RPGRIP1L are proposed to form a functional NPHP1-4-8 module localized to cell-cell contacts and the ciliary transition zone; NPHP4 mediates the interaction between NPHP1 and RPGRIP1L. Interacts with IQCB1/NPHP5; the interaction likely requires additional interactors. Interacts with RPGRIP1, CEP164, JADE1, PALS1, INADL, PARD6A, INVS, DVL2, LATS1. Interacts with INTU; INTU mediates the interaction between NPHP4 and DAAM1. Interacts with SPATA7. Expressed in kidney, skeletal muscle, heart and liver, and to a lesser extent in brain and lung.

The protein localises to the cytoplasm. Its subcellular location is the cytoskeleton. It localises to the cilium basal body. It is found in the microtubule organizing center. The protein resides in the centrosome. The protein localises to the cell junction. Its subcellular location is the tight junction. It localises to the nucleus. In terms of biological role, involved in the organization of apical junctions; the function is proposed to implicate a NPHP1-4-8 module. Does not seem to be strictly required for ciliogenesis. Required for building functional cilia. Involved in the organization of the subapical actin network in multiciliated epithelial cells. Seems to recruit INT to basal bodies of motile cilia which subsequently interacts with actin-modifying proteins such as DAAM1. In cooperation with INVS may down-regulate the canonical Wnt pathway and promote the Wnt-PCP pathway by regulating expression and subcellular location of disheveled proteins. Stabilizes protein levels of JADE1 and promotes its translocation to the nucleus leading to cooperative inhibition of canonical Wnt signaling. Acts as a negative regulator of the hippo pathway by association with LATS1 and modifying LATS1-dependent phosphorylation and localization of WWTR1/TAZ. This chain is Nephrocystin-4 (NPHP4), found in Homo sapiens (Human).